Reading from the N-terminus, the 508-residue chain is Photosystem II CP47 reaction center protein (508 aa).

The next 6 helical transmembrane spans lie at 21 to 36 (AVHL…WAGS), 101 to 115 (IVLS…VWHW), 140 to 156 (GIHL…FGAF), 203 to 218 (IAAG…FHLT), 237 to 252 (VLSS…AFVV), and 457 to 472 (SFAL…HGSR).

This sequence belongs to the PsbB/PsbC family. PsbB subfamily. In terms of assembly, PSII is composed of 1 copy each of membrane proteins PsbA, PsbB, PsbC, PsbD, PsbE, PsbF, PsbH, PsbI, PsbJ, PsbK, PsbL, PsbM, PsbT, PsbX, PsbY, PsbZ, Psb30/Ycf12, peripheral proteins PsbO, CyanoQ (PsbQ), PsbU, PsbV and a large number of cofactors. It forms dimeric complexes. Binds multiple chlorophylls. PSII binds additional chlorophylls, carotenoids and specific lipids. serves as cofactor.

The protein resides in the cellular thylakoid membrane. One of the components of the core complex of photosystem II (PSII). It binds chlorophyll and helps catalyze the primary light-induced photochemical processes of PSII. PSII is a light-driven water:plastoquinone oxidoreductase, using light energy to abstract electrons from H(2)O, generating O(2) and a proton gradient subsequently used for ATP formation. This is Photosystem II CP47 reaction center protein from Synechococcus elongatus (strain ATCC 33912 / PCC 7942 / FACHB-805) (Anacystis nidulans R2).